Reading from the N-terminus, the 214-residue chain is Phosphoheptose isomerase (214 aa).

Residues 51 to 209 form the SIS domain; it reads IASTFEDGGK…IDLVERLLGY (159 aa). 66–68 provides a ligand contact to substrate; it reads NGG. Residues His-75 and Glu-79 each coordinate Zn(2+). Substrate contacts are provided by residues Glu-79, 110 to 111, 136 to 138, Ser-141, and Gln-189; these read ND and STS. The Zn(2+) site is built by Gln-189 and His-197.

Belongs to the SIS family. GmhA subfamily. Requires Zn(2+) as cofactor.

It is found in the cytoplasm. The catalysed reaction is 2 D-sedoheptulose 7-phosphate = D-glycero-alpha-D-manno-heptose 7-phosphate + D-glycero-beta-D-manno-heptose 7-phosphate. It participates in carbohydrate biosynthesis; D-glycero-D-manno-heptose 7-phosphate biosynthesis; D-glycero-alpha-D-manno-heptose 7-phosphate and D-glycero-beta-D-manno-heptose 7-phosphate from sedoheptulose 7-phosphate: step 1/1. Its function is as follows. Catalyzes the isomerization of sedoheptulose 7-phosphate in D-glycero-D-manno-heptose 7-phosphate. This is Phosphoheptose isomerase from Chlorobium limicola (strain DSM 245 / NBRC 103803 / 6330).